A 230-amino-acid chain; its full sequence is Sugar fermentation stimulation protein homolog (230 aa).

The protein belongs to the SfsA family.

In Clostridium botulinum (strain Loch Maree / Type A3), this protein is Sugar fermentation stimulation protein homolog.